The primary structure comprises 110 residues: Senescence associated gene 20 (110 aa).

In Arabidopsis thaliana (Mouse-ear cress), this protein is Senescence associated gene 20.